The chain runs to 144 residues: MNFLGTYTPKLDEKGRLFLPAKFRDRLAEGLVVTQGQENCLVVWPTDVFMEEARRAQATPMTVRGARDYARVLFAGADEGALDKQGRINIAAPLREYAALDREVVVIGVMDRIEIWDPVRWREYSAGAQAKFAELDEQPAHTSG.

SpoVT-AbrB domains lie at 6-48 (TYTP…PTDV) and 77-120 (ADEG…DPVR).

Belongs to the MraZ family. Forms oligomers.

The protein resides in the cytoplasm. Its subcellular location is the nucleoid. The protein is Transcriptional regulator MraZ of Nocardioides sp. (strain ATCC BAA-499 / JS614).